The following is a 716-amino-acid chain: Astellifadiene synthase (716 aa).

Residues 1-323 are terpene cyclase; sequence MEFKYSTLID…SPRYYTDAKF (323 aa). Asp92 contacts Mg(2+). Residues Asp92, 179 to 182, Asn223, 227 to 231, and 316 to 317 each bind substrate; these read RIYD, SWEKE, and RY. The short motif at 92 to 96 is the DDXXD 1 element; sequence DDVID. The short motif at 223-231 is the NSE/DTE element; that stretch reads NDLVSWEKE. The segment at 324-713 is prenyltransferase; the sequence is SQRQLDWIKN…FQLKLILQFL (390 aa). Positions 436, 439, and 468 each coordinate isopentenyl diphosphate. 2 residues coordinate Mg(2+): Asp475 and Asp479. Residues 475-479 carry the DDXXD 2 motif; that stretch reads DDVED. Position 484 (Arg484) interacts with dimethylallyl diphosphate. Residue Arg485 participates in isopentenyl diphosphate binding. Dimethylallyl diphosphate is bound by residues Lys562, Thr563, Gln598, Asn605, Lys615, and Lys625.

It in the N-terminal section; belongs to the terpene synthase family. This sequence in the C-terminal section; belongs to the FPP/GGPP synthase family. As to quaternary structure, hexamer. It depends on Mg(2+) as a cofactor.

The catalysed reaction is isopentenyl diphosphate + (2E,6E)-farnesyl diphosphate = (2E,6E,10E)-geranylgeranyl diphosphate + diphosphate. It carries out the reaction isopentenyl diphosphate + (2E,6E,10E)-geranylgeranyl diphosphate = (2E,6E,10E,14E)-geranylfarnesyl diphosphate + diphosphate. It catalyses the reaction (2E,6E,10E,14E)-geranylfarnesyl diphosphate = astellifadiene + diphosphate. It functions in the pathway secondary metabolite biosynthesis; terpenoid biosynthesis. Bifunctional terpene synthase that converts dimethylallyl diphosphate (DMAPP) and isopentenyl diphosphate (IPP) into astellifadiene. The C-terminal prenyltransferase (PT) domain of EvAS catalyzes formation of geranylfarnesyl pyrophosphate (GFPP), whereas the N-terminal terpene cyclase (TC) domain catalyzes the cyclization of GFPP to astellifadiene. The chain is Astellifadiene synthase from Emericella variicolor (Aspergillus stellatus).